The chain runs to 207 residues: Ribosome maturation factor RimP (207 aa).

The tract at residues 171 to 207 is disordered; the sequence is RAPGGAPEEGEEDTTEAAPEGAGKSPKPGRRPARKTH. Basic residues predominate over residues 197–207; sequence KPGRRPARKTH.

This sequence belongs to the RimP family.

Its subcellular location is the cytoplasm. Functionally, required for maturation of 30S ribosomal subunits. The polypeptide is Ribosome maturation factor RimP (Gluconacetobacter diazotrophicus (strain ATCC 49037 / DSM 5601 / CCUG 37298 / CIP 103539 / LMG 7603 / PAl5)).